The following is a 182-amino-acid chain: Peptidoglycan recognition protein 1 (182 aa).

The signal sequence occupies residues 1 to 18 (MLFACALLALLGLATSCS). 3 disulfide bridges follow: Cys17–Cys141, Cys33–Cys78, and Cys54–Cys60. An N-acetylmuramoyl-L-alanine amidase domain is found at 39-167 (HPVRYVVISH…RDVQSTLSPG (129 aa)).

The protein belongs to the N-acetylmuramoyl-L-alanine amidase 2 family. In terms of assembly, homodimer; disulfide-linked. Interacts with HSPA1A; this interaction forms a cytotoxic complex that is released by lymphokine-activated killer cells. Interacts with HSPBP1; this interaction blocks the cytotoxic activity of the PGLYRP1-HSPA1A complex. As to expression, strongly expressed in spleen and lung. Also detected in brain and thymus. In the lung, expressed in the intraalveolar space, in the brain, expressed in the Purkinje cells of the cerebellum and in certain layers of neurons in the hippocampus. Also detected in cells filling the space within the intestinal villus.

It is found in the cytoplasm. The protein localises to the secreted. In terms of biological role, innate immunity protein that plays several important functions in antimicrobial and antitumor defense systems. Acts as a pattern receptor that binds to murein peptidoglycans (PGN) of Gram-positive bacteria and thus provides bactericidal activity. Forms an equimolar complex with heat shock protein HSPA1A and induces programmed cell death through apoptosis and necroptosis in tumor cell lines by activating the TNFR1 receptor on the target cell membrane. In addition, acts in complex with the Ca(2+)-binding protein S100A4 as a chemoattractant able to induce lymphocyte movement. Mechanistically, this complex acts as a ligand of the chemotactic receptors CCR5 and CXCR3 which are present on the cells of the immune system. Also promotes the activation of lymphocytes that become able to kill virus-infected cells as well as tumor cells by modulating the spectrum of their target-cell specificity. Induction of cytotoxicity on monocyte surface requires interaction with TREM1 receptor. This Mus musculus (Mouse) protein is Peptidoglycan recognition protein 1 (Pglyrp1).